Here is a 464-residue protein sequence, read N- to C-terminus: Macrophage metalloelastase (464 aa).

The signal sequence occupies residues 1-17 (MKFLLLILTLWVTSSGA). A propeptide spans 18–100 (DPLKENDMLF…DVYHFKTMPG (83 aa)) (activation peptide). An N-linked (GlcNAc...) asparagine glycan is attached at N69. Residues 85–92 (PRCGVPDV) carry the Cysteine switch motif. C87 serves as a coordination point for Zn(2+). Ca(2+)-binding residues include D119 and D153. The Zn(2+) site is built by H163 and D165. Positions 170, 171, 173, and 175 each coordinate Ca(2+). H178 is a Zn(2+) binding site. Ca(2+)-binding residues include G185, G187, and D189. Residue H191 coordinates Zn(2+). Ca(2+)-binding residues include D193, E194, and E196. H213 is a binding site for Zn(2+). The active site involves E214. Residues H217 and H223 each contribute to the Zn(2+) site. Hemopexin repeat units follow at residues 274–323 (PTAC…WPTL), 324–370 (PSGI…GFPD), 372–420 (VKKI…FPGI), and 421–464 (GPKI…WFDC). C277 and C464 are oxidised to a cystine. Ca(2+)-binding residues include D284, E328, D376, and D425.

The protein belongs to the peptidase M10A family. Ca(2+) is required as a cofactor. The cofactor is Zn(2+).

Its subcellular location is the secreted. The protein resides in the extracellular space. The protein localises to the extracellular matrix. It carries out the reaction Hydrolysis of soluble and insoluble elastin. Specific cleavages are also produced at 14-Ala-|-Leu-15 and 16-Tyr-|-Leu-17 in the B chain of insulin.. May be involved in tissue injury and remodeling. Has significant elastolytic activity. Can accept large and small amino acids at the P1' site, but has a preference for leucine. Aromatic or hydrophobic residues are preferred at the P1 site, with small hydrophobic residues (preferably alanine) occupying P3. The polypeptide is Macrophage metalloelastase (MMP12) (Oryctolagus cuniculus (Rabbit)).